The following is a 197-amino-acid chain: Casparian strip membrane protein 4 (197 aa).

At 1 to 34 the chain is on the cytoplasmic side; it reads MMSSTTIDVPAESSNVAKGKAVLVAAPRPGGWKK. The helical transmembrane segment at 35 to 55 threads the bilayer; that stretch reads GIAIVDFVLRLGAVAAALGAA. Residues 56–85 lie on the Extracellular side of the membrane; sequence TTMATADQTLPFFTQFFQFEASYDSFTTFQ. The chain crosses the membrane as a helical span at residues 86 to 106; the sequence is FFVITMALVGCYLVLSLPLSI. The Cytoplasmic portion of the chain corresponds to 107–118; sequence VSIIRPHALGPK. The helical transmembrane segment at 119–139 threads the bilayer; it reads LFLIILDTVFLTLATASAASA. The Extracellular portion of the chain corresponds to 140-171; sequence AAVVYVAHNGNQDSNWLAICNQFGDFCAQTSG. The helical transmembrane segment at 172-192 threads the bilayer; the sequence is AVVSSLVAVVVFVLLIVMSAL. The Cytoplasmic segment spans residues 193–197; the sequence is ALGKH.

Belongs to the Casparian strip membrane proteins (CASP) family. Homodimer and heterodimers.

It is found in the cell membrane. Functionally, regulates membrane-cell wall junctions and localized cell wall deposition. Required for establishment of the Casparian strip membrane domain (CSD) and the subsequent formation of Casparian strips, a cell wall modification of the root endodermis that determines an apoplastic barrier between the intraorganismal apoplasm and the extraorganismal apoplasm and prevents lateral diffusion. This is Casparian strip membrane protein 4 from Lotus japonicus (Lotus corniculatus var. japonicus).